The chain runs to 220 residues: Cytidylate kinase (220 aa).

10-18 (GPAGAGKST) is an ATP binding site.

This sequence belongs to the cytidylate kinase family. Type 1 subfamily.

The protein localises to the cytoplasm. It carries out the reaction CMP + ATP = CDP + ADP. It catalyses the reaction dCMP + ATP = dCDP + ADP. This chain is Cytidylate kinase, found in Alkaliphilus metalliredigens (strain QYMF).